The chain runs to 198 residues: Ribonuclease HII (198 aa).

An RNase H type-2 domain is found at 10 to 198; that stretch reads QLVAGVDEVG…PVKRALGLAS (189 aa). 3 residues coordinate a divalent metal cation: Asp16, Glu17, and Asp108.

The protein belongs to the RNase HII family. Mn(2+) serves as cofactor. Mg(2+) is required as a cofactor.

Its subcellular location is the cytoplasm. The catalysed reaction is Endonucleolytic cleavage to 5'-phosphomonoester.. Endonuclease that specifically degrades the RNA of RNA-DNA hybrids. This is Ribonuclease HII from Shigella boydii serotype 18 (strain CDC 3083-94 / BS512).